The chain runs to 237 residues: Ribose-5-phosphate isomerase A (237 aa).

Substrate is bound by residues 30–33 (SGST), 87–90 (DGAD), and 100–103 (KGGG). The active-site Proton acceptor is the Glu-109. Lys-127 contributes to the substrate binding site.

It belongs to the ribose 5-phosphate isomerase family. In terms of assembly, homodimer.

The enzyme catalyses aldehydo-D-ribose 5-phosphate = D-ribulose 5-phosphate. It participates in carbohydrate degradation; pentose phosphate pathway; D-ribose 5-phosphate from D-ribulose 5-phosphate (non-oxidative stage): step 1/1. Functionally, catalyzes the reversible conversion of ribose-5-phosphate to ribulose 5-phosphate. This Prochlorococcus marinus (strain SARG / CCMP1375 / SS120) protein is Ribose-5-phosphate isomerase A.